We begin with the raw amino-acid sequence, 888 residues long: Dilute domain-containing protein YPR089W (888 aa).

The 386-residue stretch at 360-745 folds into the Dilute domain; sequence DIVLQSYWLS…KKFLNNKIKD (386 aa). Disordered stretches follow at residues 462 to 504, 805 to 827, and 865 to 888; these read KEQQ…NNSS, KQRQ…TGDE, and LNIP…QNPW. Polar residues-rich tracts occupy residues 809–823 and 867–880; these read NEPQ…TSDF and IPSS…WSNN.

The protein localises to the golgi apparatus. This is Dilute domain-containing protein YPR089W from Saccharomyces cerevisiae (strain ATCC 204508 / S288c) (Baker's yeast).